Reading from the N-terminus, the 649-residue chain is Protein translocase subunit SecA 2 (649 aa).

Residues glutamine 105, 123-127 (GEGKT), and aspartate 535 each bind ATP.

Belongs to the SecA family. As to quaternary structure, monomer and homodimer. Part of the essential Sec protein translocation apparatus which comprises SecA, SecYEG and auxiliary proteins SecDF-YajC and YidC.

The protein localises to the cell inner membrane. Its subcellular location is the cytoplasm. The enzyme catalyses ATP + H2O + cellular proteinSide 1 = ADP + phosphate + cellular proteinSide 2.. In terms of biological role, part of the Sec protein translocase complex. Interacts with the SecYEG preprotein conducting channel. Has a central role in coupling the hydrolysis of ATP to the transfer of proteins into and across the cell membrane, serving both as a receptor for the preprotein-SecB complex and as an ATP-driven molecular motor driving the stepwise translocation of polypeptide chains across the membrane. The polypeptide is Protein translocase subunit SecA 2 (Magnetococcus marinus (strain ATCC BAA-1437 / JCM 17883 / MC-1)).